A 249-amino-acid chain; its full sequence is Methylthioribulose-1-phosphate dehydratase (249 aa).

The disordered stretch occupies residues Met1–Glu25. A compositionally biased stretch (polar residues) spans Thr9 to Leu18. Cys105 serves as a coordination point for substrate. Residues His122 and His124 each contribute to the Zn(2+) site. Catalysis depends on Glu151, which acts as the Proton donor/acceptor. His207 is a binding site for Zn(2+).

The protein belongs to the aldolase class II family. MtnB subfamily. It depends on Zn(2+) as a cofactor.

It localises to the cytoplasm. It carries out the reaction 5-(methylsulfanyl)-D-ribulose 1-phosphate = 5-methylsulfanyl-2,3-dioxopentyl phosphate + H2O. It participates in amino-acid biosynthesis; L-methionine biosynthesis via salvage pathway; L-methionine from S-methyl-5-thio-alpha-D-ribose 1-phosphate: step 2/6. In terms of biological role, catalyzes the dehydration of methylthioribulose-1-phosphate (MTRu-1-P) into 2,3-diketo-5-methylthiopentyl-1-phosphate (DK-MTP-1-P). The polypeptide is Methylthioribulose-1-phosphate dehydratase (Arthroderma otae (strain ATCC MYA-4605 / CBS 113480) (Microsporum canis)).